Reading from the N-terminus, the 266-residue chain is MKINPHNLARLTKKLGYEFNEPLLLVQALTHRSAKGAHNERLEFLGDSILGFVIAEALYDKFPKHDEGDLTRMRSSLVKGVTLAEVARDFNLGECLILGPGELKSGGHHRESILEDAIEAIIGAVYLDSNIECCKALILSWFERRLMVIKPGNEQKDPKTRLQEFLQGRKIPLPTYEVIDTTGQSHNQEFTVRCQTSVISEVVIAKGTSRRKAEQEAAQQILALIEKEREQEKEVKIKPTKQAKLANPRHTKSNPSSSSKKSSTRK.

An RNase III domain is found at 8–130; that stretch reads LARLTKKLGY…IIGAVYLDSN (123 aa). Residue E43 coordinates Mg(2+). D47 is a catalytic residue. 2 residues coordinate Mg(2+): D116 and E119. The active site involves E119. Residues 157-227 form the DRBM domain; it reads DPKTRLQEFL…AQQILALIEK (71 aa). The interval 229 to 266 is disordered; the sequence is REQEKEVKIKPTKQAKLANPRHTKSNPSSSSKKSSTRK. Low complexity predominate over residues 253–266; that stretch reads SNPSSSSKKSSTRK.

This sequence belongs to the ribonuclease III family. Homodimer. The cofactor is Mg(2+).

The protein resides in the cytoplasm. The enzyme catalyses Endonucleolytic cleavage to 5'-phosphomonoester.. Digests double-stranded RNA. Involved in the processing of primary rRNA transcript to yield the immediate precursors to the large and small rRNAs (23S and 16S). Processes some mRNAs, and tRNAs when they are encoded in the rRNA operon. Processes pre-crRNA and tracrRNA of type II CRISPR loci if present in the organism. The protein is Ribonuclease 3 of Colwellia psychrerythraea (strain 34H / ATCC BAA-681) (Vibrio psychroerythus).